The sequence spans 189 residues: Elongation factor P (189 aa).

N6-(3,6-diaminohexanoyl)-5-hydroxylysine is present on K34.

It belongs to the elongation factor P family. May be beta-lysylated on the epsilon-amino group of Lys-34 by the combined action of EpmA and EpmB, and then hydroxylated on the C5 position of the same residue by EpmC (if this protein is present). Lysylation is critical for the stimulatory effect of EF-P on peptide-bond formation. The lysylation moiety may extend toward the peptidyltransferase center and stabilize the terminal 3-CCA end of the tRNA. Hydroxylation of the C5 position on Lys-34 may allow additional potential stabilizing hydrogen-bond interactions with the P-tRNA.

The protein localises to the cytoplasm. It functions in the pathway protein biosynthesis; polypeptide chain elongation. Its function is as follows. Involved in peptide bond synthesis. Alleviates ribosome stalling that occurs when 3 or more consecutive Pro residues or the sequence PPG is present in a protein, possibly by augmenting the peptidyl transferase activity of the ribosome. Modification of Lys-34 is required for alleviation. The polypeptide is Elongation factor P (Francisella tularensis subsp. novicida (strain U112)).